We begin with the raw amino-acid sequence, 273 residues long: Undecaprenyl-diphosphatase (273 aa).

7 helical membrane-spanning segments follow: residues 45-65 (AKTFEVVIQLGSILAVVVMFW), 90-110 (LTLIHILLGMVPAVVLGLIFH), 116-136 (LFNPINVMYALVVGGVLLIAA), 154-173 (YRQAFMIGCFQCLALWPGFS), 190-210 (YAASEFSFLLAVPMMMGATAL), 222-242 (ADFPMFAVGFVTAFLVALVAI), and 252-272 (ISFIPFAIYRFIVAAAVYVVF).

The protein belongs to the UppP family.

It is found in the cell inner membrane. The enzyme catalyses di-trans,octa-cis-undecaprenyl diphosphate + H2O = di-trans,octa-cis-undecaprenyl phosphate + phosphate + H(+). In terms of biological role, catalyzes the dephosphorylation of undecaprenyl diphosphate (UPP). Confers resistance to bacitracin. The polypeptide is Undecaprenyl-diphosphatase (Enterobacter sp. (strain 638)).